Consider the following 198-residue polypeptide: Glycerol-3-phosphate acyltransferase (198 aa).

5 consecutive transmembrane segments (helical) span residues 10–30 (LIPILFASYLIGSIPFSWILV), 57–77 (GISFLVLLLDIFKSVLVILIL), 86–106 (IMYLTGFTVVLGHIFPVWFLF), 118–138 (VVLSINIKIFFLFIITWAVVF), and 160–180 (AVTENFNSSIFYIAMSIIVLI).

It belongs to the PlsY family. In terms of assembly, probably interacts with PlsX.

It localises to the cell inner membrane. The catalysed reaction is an acyl phosphate + sn-glycerol 3-phosphate = a 1-acyl-sn-glycero-3-phosphate + phosphate. The protein operates within lipid metabolism; phospholipid metabolism. In terms of biological role, catalyzes the transfer of an acyl group from acyl-phosphate (acyl-PO(4)) to glycerol-3-phosphate (G3P) to form lysophosphatidic acid (LPA). This enzyme utilizes acyl-phosphate as fatty acyl donor, but not acyl-CoA or acyl-ACP. The polypeptide is Glycerol-3-phosphate acyltransferase (Anaplasma marginale (strain Florida)).